Consider the following 672-residue polypeptide: DNA-directed RNA polymerase subunit gamma (672 aa).

Zn(2+)-binding residues include Cys70, Cys72, Cys85, and Cys88. Residues Asp466, Asp468, and Asp470 each coordinate Mg(2+).

This sequence belongs to the RNA polymerase beta' chain family. RpoC1 subfamily. In terms of assembly, in cyanobacteria the RNAP catalytic core is composed of 2 alpha, 1 beta, 1 beta', 1 gamma and 1 omega subunit. When a sigma factor is associated with the core the holoenzyme is formed, which can initiate transcription. Mg(2+) serves as cofactor. Zn(2+) is required as a cofactor.

It carries out the reaction RNA(n) + a ribonucleoside 5'-triphosphate = RNA(n+1) + diphosphate. Functionally, DNA-dependent RNA polymerase catalyzes the transcription of DNA into RNA using the four ribonucleoside triphosphates as substrates. This is DNA-directed RNA polymerase subunit gamma from Trichodesmium erythraeum (strain IMS101).